The primary structure comprises 589 residues: Protein OS-9 homolog (589 aa).

The N-terminal stretch at 1–21 (MFSILNKLGIIWLALANISNC) is a signal peptide. Asn-17, Asn-61, and Asn-90 each carry an N-linked (GlcNAc...) asparagine glycan. Residues 130–288 (KDCVFAYGSN…VIGVPKLCSL (159 aa)) enclose the MRH domain. Cys-132 and Cys-148 are joined by a disulfide. A mannooligosaccharide derivative is bound by residues Trp-143, Gln-155, Asp-241, Arg-247, Glu-270, and Tyr-276. Disulfide bonds link Cys-240–Cys-274 and Cys-255–Cys-286. Asn-426 carries N-linked (GlcNAc...) asparagine glycosylation. The segment at 497 to 520 (GKGSALDSTNNDKNNKATAENDKQ) is disordered. Residues 509–519 (KNNKATAENDK) are compositionally biased toward basic and acidic residues. The Prevents secretion from ER signature appears at 586–589 (HDEL).

Belongs to the OS-9 family. As to quaternary structure, interacts with missfolded ER lumenal proteins.

It localises to the endoplasmic reticulum membrane. Its function is as follows. Lectin involved in the quality control of the secretory pathway. As a member of the endoplasmic reticulum-associated degradation lumenal (ERAD-L) surveillance system, targets misfolded endoplasmic reticulum lumenal glycoproteins for degradation. In Debaryomyces hansenii (strain ATCC 36239 / CBS 767 / BCRC 21394 / JCM 1990 / NBRC 0083 / IGC 2968) (Yeast), this protein is Protein OS-9 homolog (YOS9).